We begin with the raw amino-acid sequence, 487 residues long: MGIRMGRRLLLITLLLGALLCNNVAYAKFSRYSFPKDFIFGTGSAAYQYEGAYKEGGKGPSIWDTFTHIPGKILNNDTGDVANDFYHRYKEDVNLLKDMNMDAFRFSIAWTRILPNGSLSGGINREGVAFYNSLINDVIAKGMIPFVTIFHWDTPPGSGKQIRRLPERKHSNMHEKDYADFAEVCFHEFGDRVKYWTTFNEPFTYSAYGYGGGVFASGRCAPYVSKSCGAGDSSREPYLVTHHIHLSHAAVVHLYRTRYQPTQKGQIGMVVVTHWFVPYDDTAADRGAVQRSLDFMFGWFMDPLVHGDYPGTMRGWLGDRLPKFTPAQSAMVKGSYDFIGINYYTTYYAKSVPPPNSNELSYDVDSRANTTGFRNGKPIGPQFTPIFFNYPPGIREVLLYTKRRYNNPAIYITENGGNNSTVPEALRDGHRIEFHSKHLQFVNHAIRNGWGDGYLDRFGLIYVDRKTLTRYRKDSSYWIEDFLKKQY.

Positions 1–27 (MGIRMGRRLLLITLLLGALLCNNVAYA) are cleaved as a signal peptide. Position 48 (glutamine 48) interacts with a beta-D-glucoside. Residues asparagine 76 and asparagine 116 are each glycosylated (N-linked (GlcNAc...) asparagine). A beta-D-glucoside-binding positions include histidine 151 and 200 to 201 (NE). Glutamate 201 functions as the Proton donor in the catalytic mechanism. A disulfide bond links cysteine 220 and cysteine 228. Tyrosine 344 is an a beta-D-glucoside binding site. Asparagine 369 is a glycosylation site (N-linked (GlcNAc...) asparagine). Glutamate 414 lines the a beta-D-glucoside pocket. Glutamate 414 acts as the Nucleophile in catalysis. N-linked (GlcNAc...) asparagine glycans are attached at residues asparagine 418 and asparagine 419. Phenylalanine 458 is an a beta-D-glucoside binding site.

Belongs to the glycosyl hydrolase 1 family.

It catalyses the reaction Hydrolysis of terminal, non-reducing beta-D-glucosyl residues with release of beta-D-glucose.. The polypeptide is Putative beta-glucosidase 35 (BGLU35) (Oryza sativa subsp. japonica (Rice)).